Reading from the N-terminus, the 345-residue chain is Leucine zipper protein 2 (345 aa).

Residues 1–19 form the signal peptide; the sequence is MKFNAAHYLLPLLPALVLS. A coiled-coil region spans residues 16-211; that stretch reads LVLSTRQDYE…QMKAMKETVQ (196 aa). Residue asparagine 133 is glycosylated (N-linked (GlcNAc...) asparagine). The interval 164 to 192 is leucine-zipper; the sequence is LRYGKKDLLFKAQQLTELEQKLAVAKNEL. Residues 223–345 are disordered; it reads PPLSLMPSNP…GTPAREEKLL (123 aa). Residues 261–277 are compositionally biased toward basic and acidic residues; that stretch reads GHHDSSQVQATKEESRR. The span at 298–313 shows a compositional bias: polar residues; the sequence is PQSNSTAESELTTQKL. Asparagine 301 carries N-linked (GlcNAc...) asparagine glycosylation.

As to expression, expression found only in the brain and spinal cord.

The protein resides in the secreted. This chain is Leucine zipper protein 2 (Luzp2), found in Mus musculus (Mouse).